Consider the following 144-residue polypeptide: Androgenic gland hormone (144 aa).

A signal peptide spans 1-21; that stretch reads MKGLVILVSLMCLALYNRICA. 4 cysteine pairs are disulfide-bonded: Cys33-Cys123, Cys42-Cys59, Cys44-Cys141, and Cys124-Cys132. Residues 68–113 constitute a propeptide, c peptide; sequence SAPEDELAFEDYEDQDYFHPRALSIPSEIEHDNEKESDAFSILSRG. N-linked (GlcNAc...) (complex) asparagine glycosylation is present at Asn133.

As to expression, androgenic gland.

The protein localises to the secreted. Controls sex differentiation and the formation of male appendages, spermatogenesis, pigmentation, and male specific behavior. The chain is Androgenic gland hormone from Armadillidium vulgare (Pillbug).